The chain runs to 362 residues: S-adenosylmethionine-dependent nucleotide dehydratase RSAD2 (362 aa).

The tract at residues 49–71 (QQLQGKTEAGEPPRAQEDSHLPT) is disordered. Basic and acidic residues predominate over residues 56–68 (EAGEPPRAQEDSH). The 221-residue stretch at 70 to 290 (PTTPTSVNYH…LDRHKDVSCL (221 aa)) folds into the Radical SAM core domain. The [4Fe-4S] cluster site is built by Cys84, Cys88, and Cys91. Residue Lys198 is modified to N6-acetyllysine. Lys207 participates in a covalent cross-link: Glycyl lysine isopeptide (Lys-Gly) (interchain with G-Cter in ubiquitin).

This sequence belongs to the radical SAM superfamily. RSAD2 family. Homodimer. Interacts with IRAK1 and TRAF6. Interacts with FPPS. Interacts with HADHB. Interacts (via C-terminus) with VAPA/VAP33 (via C-terminus). [4Fe-4S] cluster serves as cofactor. Post-translationally, acetylated by HAT1. HAT1-mediated acetylation of Lys-198 in turn recruits UBE4A that stimulates RSAD2 polyubiquitination leading to proteasomal degradation. In terms of processing, 'Lys-6'-linked polyubiquitination at Lys-207 leads to RSAD2 protein degradation.

It localises to the endoplasmic reticulum membrane. Its subcellular location is the golgi apparatus. It is found in the endoplasmic reticulum. The protein localises to the lipid droplet. The protein resides in the mitochondrion. It localises to the mitochondrion inner membrane. Its subcellular location is the mitochondrion outer membrane. It catalyses the reaction CTP + AH2 + S-adenosyl-L-methionine = 3'-deoxy-3',4'-didehydro-CTP + 5'-deoxyadenosine + L-methionine + A + H2O + H(+). With respect to regulation, IRAK1 and TRAF6 synergistically activate RSAD2 increasing its activity with CTP as substrate about 10-fold. In terms of biological role, interferon-inducible antiviral protein which plays a major role in the cell antiviral state induced by type I and type II interferon. Catalyzes the conversion of cytidine triphosphate (CTP) to 3'-deoxy-3',4'-didehydro-CTP (ddhCTP) via a SAM-dependent radical mechanism. In turn, ddhCTP acts as a chain terminator for the RNA-dependent RNA polymerases from multiple viruses and directly inhibits viral replication. Therefore, inhibits a wide range of DNA and RNA viruses. Also promotes TLR7 and TLR9-dependent production of IFN-beta production in plasmacytoid dendritic cells (pDCs) by facilitating 'Lys-63'-linked ubiquitination of IRAK1 by TRAF6. Plays a role in CD4+ T-cells activation and differentiation. Facilitates T-cell receptor (TCR)-mediated GATA3 activation and optimal T-helper 2 (Th2) cytokine production by modulating NFKB1 and JUNB activities. Can inhibit secretion of soluble proteins. This is S-adenosylmethionine-dependent nucleotide dehydratase RSAD2 from Sus scrofa (Pig).